Consider the following 41-residue polypeptide: Pathogenesis-related protein (41 aa).

This sequence belongs to the CRISP family.

Functionally, probably involved in the defense reaction of plants against pathogens. This is Pathogenesis-related protein from Cucumis melo (Muskmelon).